A 344-amino-acid polypeptide reads, in one-letter code: Protein L-Myc-1-B (344 aa).

2 stretches are compositionally biased toward polar residues: residues 104 to 113 (GSPRVTNTQK) and 213 to 223 (NTMSPQHNFHS). 2 disordered regions span residues 104–162 (GSPR…EDEI) and 208–271 (LPPE…YLER). A compositionally biased stretch (basic and acidic residues) spans 259 to 270 (DLAKRKNHNYLE). One can recognise a bHLH domain in the interval 261–313 (AKRKNHNYLERKRRNDLRSRFLALREEVPSLSRSTKTPKVVVLSKATEFLKGL). Residues 313 to 341 (LVIQEQQLTAEKLKLWSRHQQLLRRISQL) form a leucine-zipper region.

As to quaternary structure, efficient DNA binding requires dimerization with another bHLH protein. Binds DNA as a heterodimer with MAX. High levels in oocytes, modest levels in kidney and low levels in spleen.

It is found in the nucleus. The polypeptide is Protein L-Myc-1-B (mycl1-b) (Xenopus laevis (African clawed frog)).